A 326-amino-acid polypeptide reads, in one-letter code: Biotin synthase (326 aa).

In terms of domain architecture, Radical SAM core spans 41–271 (YHVQLASLLS…EARVRLSAGR (231 aa)). [4Fe-4S] cluster contacts are provided by cysteine 56, cysteine 60, and cysteine 63. [2Fe-2S] cluster contacts are provided by cysteine 102, cysteine 134, cysteine 194, and arginine 266.

The protein belongs to the radical SAM superfamily. Biotin synthase family. In terms of assembly, homodimer. The cofactor is [4Fe-4S] cluster. It depends on [2Fe-2S] cluster as a cofactor.

The enzyme catalyses (4R,5S)-dethiobiotin + (sulfur carrier)-SH + 2 reduced [2Fe-2S]-[ferredoxin] + 2 S-adenosyl-L-methionine = (sulfur carrier)-H + biotin + 2 5'-deoxyadenosine + 2 L-methionine + 2 oxidized [2Fe-2S]-[ferredoxin]. It participates in cofactor biosynthesis; biotin biosynthesis; biotin from 7,8-diaminononanoate: step 2/2. Catalyzes the conversion of dethiobiotin (DTB) to biotin by the insertion of a sulfur atom into dethiobiotin via a radical-based mechanism. In Synechococcus sp. (strain RCC307), this protein is Biotin synthase.